The chain runs to 218 residues: Thiopurine S-methyltransferase (218 aa).

Residues Trp-10, Leu-45, Glu-66, and Arg-123 each coordinate S-adenosyl-L-methionine.

The protein belongs to the class I-like SAM-binding methyltransferase superfamily. TPMT family.

The protein resides in the cytoplasm. It carries out the reaction S-adenosyl-L-methionine + a thiopurine = S-adenosyl-L-homocysteine + a thiopurine S-methylether.. In terms of biological role, involved in the biological cycling of tellurium and selenium. Tellurium resistance (Ter) mechanism. This Pseudomonas syringae pv. pisi protein is Thiopurine S-methyltransferase.